Reading from the N-terminus, the 195-residue chain is Dephospho-CoA kinase (195 aa).

One can recognise a DPCK domain in the interval 3 to 195 (KIGLTGGIGS…ANMKNVIAEI (193 aa)). Residue 11–16 (GSGKST) participates in ATP binding.

The protein belongs to the CoaE family.

It localises to the cytoplasm. It carries out the reaction 3'-dephospho-CoA + ATP = ADP + CoA + H(+). The protein operates within cofactor biosynthesis; coenzyme A biosynthesis; CoA from (R)-pantothenate: step 5/5. Its function is as follows. Catalyzes the phosphorylation of the 3'-hydroxyl group of dephosphocoenzyme A to form coenzyme A. The sequence is that of Dephospho-CoA kinase from Corynebacterium glutamicum (Brevibacterium saccharolyticum).